The following is a 493-amino-acid chain: FAD-linked oxidoreductase tazL (493 aa).

An N-terminal signal peptide occupies residues 1–17 (MRSNTVILAALPLVASA). N-linked (GlcNAc...) asparagine glycans are attached at residues Asn-29, Asn-41, Asn-53, Asn-91, Asn-253, Asn-318, and Asn-387. Residues 63 to 235 (WAEPTFAVTI…TSATYEIFDA (173 aa)) form the FAD-binding PCMH-type domain.

The protein belongs to the oxygen-dependent FAD-linked oxidoreductase family.

It functions in the pathway secondary metabolite biosynthesis. Its function is as follows. FAD-linked oxidoreductase; part of the gene cluster that mediates the biosynthesis of azaterrilone A and other azaphilones, a class of fungal metabolites characterized by a highly oxygenated pyrano-quinone bicyclic core and exhibiting a broad range of bioactivities. The first step of the pathway begins with the non-reducing polyketide synthase tazA that assembles one acetyl-CoA starter unit, five malonyl-CoA units, and catalyzes a series of Claisen condensations, methylation, PT-mediated cyclization, and finally releases the first hexaketide precursor through the R-domain. The tazA product then undergoes reduction on its terminal ketone and the following pyran-ring formation by yet undetermined enzyme(s). Dehydration and enoyl reduction, possibly involving the trans-enoyl reductase tazE leads to the next intermediate. TazD is predicted as an acetyltransferase and might catalyze the acetylation steps leading to the synthesis of azaterrilone A. Azaterrilone A is not the final product of the taz pathway and both the highly reducing polyketide synthase tazB and the dual enzyme tazHJ catalyze late steps of the pathway, leading to the production of the 2 final stereoisomers that contain additional polyketide modification whose structures have still to be determined. This Aspergillus terreus (strain NIH 2624 / FGSC A1156) protein is FAD-linked oxidoreductase tazL.